The primary structure comprises 295 residues: Large ribosomal subunit protein uL18 (295 aa).

Positions proline 251–glycine 261 are enriched in basic and acidic residues. The segment at proline 251–glycine 295 is disordered. The segment covering lysine 262–methionine 271 has biased composition (basic residues).

It belongs to the universal ribosomal protein uL18 family. Component of the large ribosomal subunit (LSU).

Its subcellular location is the cytoplasm. The protein resides in the nucleus. In terms of biological role, component of the ribosome, a large ribonucleoprotein complex responsible for the synthesis of proteins in the cell. The small ribosomal subunit (SSU) binds messenger RNAs (mRNAs) and translates the encoded message by selecting cognate aminoacyl-transfer RNA (tRNA) molecules. The large subunit (LSU) contains the ribosomal catalytic site termed the peptidyl transferase center (PTC), which catalyzes the formation of peptide bonds, thereby polymerizing the amino acids delivered by tRNAs into a polypeptide chain. The nascent polypeptides leave the ribosome through a tunnel in the LSU and interact with protein factors that function in enzymatic processing, targeting, and the membrane insertion of nascent chains at the exit of the ribosomal tunnel. The sequence is that of Large ribosomal subunit protein uL18 (RPL5) from Styela clava (Sea squirt).